Here is a 1103-residue protein sequence, read N- to C-terminus: Activity-dependent neuroprotector homeobox protein (1103 aa).

Residues K39 and K72 each participate in a glycyl lysine isopeptide (Lys-Gly) (interchain with G-Cter in SUMO2) cross-link. The C2H2-type 1; degenerate zinc finger occupies 74 to 97 (FCCSACPFSSKFFSAYKSHFRNVH). S98 bears the Phosphoserine mark. A C2H2-type 2; degenerate zinc finger spans residues 107–129 (LNCPYCTFNADKKTLETHIKIFH). A disordered region spans residues 133 to 154 (SSAPSSSLSTFKDKNKNDGLKP). Over residues 143-154 (FKDKNKNDGLKP) the composition is skewed to basic and acidic residues. Residues K144 and K155 each participate in a glycyl lysine isopeptide (Lys-Gly) (interchain with G-Cter in SUMO2) cross-link. The C2H2-type 3; degenerate zinc-finger motif lies at 165 to 188 (YYCKKCTYRDPLYEIVRKHIYREH). Residues K203, K231, K266, K274, K278, K279, K311, and K335 each participate in a glycyl lysine isopeptide (Lys-Gly) (interchain with G-Cter in SUMO2) cross-link. The segment at 221-244 (IHCKRCLFMPKSYEALVQHVIEDH) adopts a C2H2-type 4; degenerate zinc-finger fold. At R348 the chain carries Asymmetric dimethylarginine. Residues 354–361 (NAPVSIPQ) are neuroprotective peptide (NAP). The interval 360–439 (PQQSQSVKQL…PAATGPPPSN (80 aa)) is disordered. Residues K367 and K408 each participate in a glycyl lysine isopeptide (Lys-Gly) (interchain with G-Cter in SUMO2) cross-link. Polar residues predominate over residues 393–423 (SLQTANTSSLPPGQVKSPSVSQSQASRVLGQ). S409 and S413 each carry phosphoserine. Residue K427 forms a Glycyl lysine isopeptide (Lys-Gly) (interchain with G-Cter in SUMO2) linkage. The segment covering 427–438 (KPPPAATGPPPS) has biased composition (pro residues). Residues 447–469 (KICTICNELFPENVYSVHFEKEH) form a C2H2-type 5; atypical zinc finger. C2H2-type zinc fingers lie at residues 489 to 510 (SKCL…MLIH) and 512 to 535 (LSCP…RMVH). Residues K600 and K606 each participate in a glycyl lysine isopeptide (Lys-Gly) (interchain with G-Cter in SUMO2) cross-link. S608 bears the Phosphoserine mark. Residues K616, K621, K632, and K658 each participate in a glycyl lysine isopeptide (Lys-Gly) (interchain with G-Cter in SUMO2) cross-link. The segment at 622–647 (TLCPLCFSILKGPISDALAHHLRERH) adopts a C2H2-type 8; atypical zinc-finger fold. The C2H2-type 9; atypical zinc finger occupies 662 to 686 (YKCIHCLGVYTSNMTASTITLHLVH). Residues 691–712 (GKTQNGQDKTNAPSRLNQSPGL) form a disordered region. Residues 692–710 (KTQNGQDKTNAPSRLNQSP) show a composition bias toward polar residues. K699 participates in a covalent cross-link: Glycyl lysine isopeptide (Lys-Gly) (interchain with G-Cter in SUMO2). S709 bears the Phosphoserine mark. Glycyl lysine isopeptide (Lys-Gly) (interchain with G-Cter in SUMO2) cross-links involve residues K716, K728, and K731. S738 carries the phosphoserine modification. K745 participates in a covalent cross-link: Glycyl lysine isopeptide (Lys-Gly) (interchain with G-Cter in SUMO2). The homeobox DNA-binding region spans 754–814 (LDPKGHEDDS…SNKRKKCVRD (61 aa)). Residue S805 is modified to Phosphoserine. Residues K807, K829, and K835 each participate in a glycyl lysine isopeptide (Lys-Gly) (interchain with G-Cter in SUMO2) cross-link. Residues 873-1029 (DSFSDSFEHL…VQDDTEQLKW (157 aa)) are disordered. S876, S878, S886, S889, and S905 each carry phosphoserine. Glycyl lysine isopeptide (Lys-Gly) (interchain with G-Cter in SUMO2) cross-links involve residues K914, K929, and K936. Over residues 922–954 (ESEKLDQKEEEDGSKYETIHLTEERAKLMHDAS) the composition is skewed to basic and acidic residues. A phosphoserine mark is found at S954 and S956. Residues 972-982 (PSESGPGSRQV) show a composition bias toward polar residues. Residue K1017 forms a Glycyl lysine isopeptide (Lys-Gly) (interchain with G-Cter in SUMO2) linkage. N6-acetyllysine; alternate occurs at positions 1036 and 1043. Glycyl lysine isopeptide (Lys-Gly) (interchain with G-Cter in SUMO2); alternate cross-links involve residues K1036 and K1043. The disordered stretch occupies residues 1045–1103 (QSQWENASENAERLPNPQIEWQNSTIDSEDGEQFDSMTDGVADPMHGSLTGVKLSSQQA). The residue at position 1072 (S1072) is a Phosphoserine.

In terms of assembly, interacts (via N-terminal region) with beta-catenin/CTNNB1 (via the central armadillo domains); interaction is direct and stabilizes CTNNB1 by modulating its phosphorylation by glycogen synthase kinase-3 beta GSK3B.

It localises to the nucleus. It is found in the chromosome. May be involved in transcriptional regulation. May mediate some of the neuroprotective peptide VIP-associated effects involving normal growth and cancer proliferation. Positively modulates WNT-beta-catenin/CTNN1B signaling, acting by regulating phosphorylation of, and thereby stabilizing, CTNNB1. May be required for neural induction and neuronal differentiation. May be involved in erythroid differentiation. In Rattus norvegicus (Rat), this protein is Activity-dependent neuroprotector homeobox protein (Adnp).